The primary structure comprises 124 residues: Small ribosomal subunit protein uS12 (124 aa).

At aspartate 89 the chain carries 3-methylthioaspartic acid.

It belongs to the universal ribosomal protein uS12 family. In terms of assembly, part of the 30S ribosomal subunit. Contacts proteins S8 and S17. May interact with IF1 in the 30S initiation complex.

Its function is as follows. With S4 and S5 plays an important role in translational accuracy. In terms of biological role, interacts with and stabilizes bases of the 16S rRNA that are involved in tRNA selection in the A site and with the mRNA backbone. Located at the interface of the 30S and 50S subunits, it traverses the body of the 30S subunit contacting proteins on the other side and probably holding the rRNA structure together. The combined cluster of proteins S8, S12 and S17 appears to hold together the shoulder and platform of the 30S subunit. The chain is Small ribosomal subunit protein uS12 from Shewanella putrefaciens (strain CN-32 / ATCC BAA-453).